The following is a 241-amino-acid chain: Uridylate kinase (241 aa).

Position 13 to 16 (13 to 16) interacts with ATP; that stretch reads KVSG. Position 55 (G55) interacts with UMP. Residues G56 and R60 each contribute to the ATP site. UMP contacts are provided by residues D75 and 136–143; that span reads TGNPFFTT. The ATP site is built by T163, Q164, Y169, and D172.

This sequence belongs to the UMP kinase family. In terms of assembly, homohexamer.

The protein resides in the cytoplasm. It catalyses the reaction UMP + ATP = UDP + ADP. It functions in the pathway pyrimidine metabolism; CTP biosynthesis via de novo pathway; UDP from UMP (UMPK route): step 1/1. With respect to regulation, inhibited by UTP. In terms of biological role, catalyzes the reversible phosphorylation of UMP to UDP. The polypeptide is Uridylate kinase (Parvibaculum lavamentivorans (strain DS-1 / DSM 13023 / NCIMB 13966)).